The primary structure comprises 419 residues: MSSDVRVHTWPCSYYLDLEKQWLPGKLTLTPRSLKFSVDKAEEVLVGLPLSSITEIRKETSLFIFSAITVLEKGQAKHWFSSLRPSRNVVFNIIEHFWRELLLSQPGTAANPTSPMTRGQELMGLMASSQRRMEDTAKVLHHQGEQLDSVMRGLEKMESDLDVADRLLTELETPSWWPFSAKFWKTPVEAKPRDSVSVAPCEPFGKEGVVIRVPAVVSQRTESHSKPGKLTVLVSGLEIHDSSSLLLHRFEKEDVDDIKVHSPYEVSIRQRFIGKPDVAYRLISAKMPEVIPILEVQFSKKIELLEDALVLRSRGRASPAEGGCSIRHAASRLMGCTTHQELPTGGQEGQQSQLQKDWPLLSEGEAQELTQILSKLKGLALDTEAELERQDAALDGITVAVDRATLTVDKHNRRMRKLL.

T-SNARE coiled-coil homology domains are found at residues 109–171 (AANP…LTEL) and 356–418 (KDWP…MRKL).

It belongs to the SVAP1 family. Associates with the BLOC-1 complex. Interacts with BLOC1S6. Forms a complex containing SNAP47, VAMP2 and STX1A.

The protein localises to the endomembrane system. The protein resides in the cytoplasm. Its subcellular location is the perinuclear region. May play a role in intracellular membrane fusion. The protein is Synaptosomal-associated protein 47 (Snap47) of Rattus norvegicus (Rat).